The chain runs to 249 residues: 1-(5-phosphoribosyl)-5-[(5-phosphoribosylamino)methylideneamino] imidazole-4-carboxamide isomerase (249 aa).

The Proton acceptor role is filled by D8. The Proton donor role is filled by D131.

This sequence belongs to the HisA/HisF family.

It localises to the cytoplasm. It catalyses the reaction 1-(5-phospho-beta-D-ribosyl)-5-[(5-phospho-beta-D-ribosylamino)methylideneamino]imidazole-4-carboxamide = 5-[(5-phospho-1-deoxy-D-ribulos-1-ylimino)methylamino]-1-(5-phospho-beta-D-ribosyl)imidazole-4-carboxamide. It participates in amino-acid biosynthesis; L-histidine biosynthesis; L-histidine from 5-phospho-alpha-D-ribose 1-diphosphate: step 4/9. The polypeptide is 1-(5-phosphoribosyl)-5-[(5-phosphoribosylamino)methylideneamino] imidazole-4-carboxamide isomerase (Leptothrix cholodnii (strain ATCC 51168 / LMG 8142 / SP-6) (Leptothrix discophora (strain SP-6))).